The chain runs to 251 residues: Orcokinin peptides type A (251 aa).

The first 20 residues, Met-1–Ala-20, serve as a signal peptide directing secretion. Propeptides lie at residues Gly-21–Val-46, Asp-225–Asp-231, and Asn-249–Glu-251.

The protein belongs to the orcokinin family.

It is found in the secreted. Myotropic peptides that enhance both the frequency and amplitude of spontaneous hindgut contractions. The polypeptide is Orcokinin peptides type A (Procambarus clarkii (Red swamp crayfish)).